Here is a 266-residue protein sequence, read N- to C-terminus: Hemin import ATP-binding protein HmuV (266 aa).

Residues 2–242 (IEAVDICVQR…QNLRDVYSCS (241 aa)) enclose the ABC transporter domain. 34 to 41 (GPNGSGKS) contributes to the ATP binding site.

The protein belongs to the ABC transporter superfamily. Heme (hemin) importer (TC 3.A.1.14.5) family. In terms of assembly, the complex is composed of two ATP-binding proteins (HmuV), two transmembrane proteins (HmuU) and a solute-binding protein (HmuT).

Its subcellular location is the cell inner membrane. Part of the ABC transporter complex HmuTUV involved in hemin import. Responsible for energy coupling to the transport system. The protein is Hemin import ATP-binding protein HmuV of Bartonella henselae (strain ATCC 49882 / DSM 28221 / CCUG 30454 / Houston 1) (Rochalimaea henselae).